Here is a 257-residue protein sequence, read N- to C-terminus: Phycoerythrobilin:ferredoxin oxidoreductase (257 aa).

Belongs to the HY2 family.

The enzyme catalyses (3Z)-phycoerythrobilin + oxidized 2[4Fe-4S]-[ferredoxin] = 15,16-dihydrobiliverdin + reduced 2[4Fe-4S]-[ferredoxin] + 2 H(+). Catalyzes the two-electron reduction of the C2 and C3(1) diene system of 15,16-dihydrobiliverdin. The protein is Phycoerythrobilin:ferredoxin oxidoreductase of Prochlorococcus marinus (strain MIT 9211).